The sequence spans 205 residues: Holliday junction branch migration complex subunit RuvA (205 aa).

A domain I region spans residues 1-64; the sequence is MIGRLRGTLA…EDAHLLYGFA (64 aa). Positions 65–143 are domain II; it reads EKRERELFRE…AWETSPAMFT (79 aa). The interval 144–154 is flexible linker; it reads LVSDGPLPVAS. Positions 154-205 are domain III; sequence SESSAEADAVSALVSLGYKPQEASKAIAAIKDKAGLSSEELIRRSLKGMISK.

This sequence belongs to the RuvA family. In terms of assembly, homotetramer. Forms an RuvA(8)-RuvB(12)-Holliday junction (HJ) complex. HJ DNA is sandwiched between 2 RuvA tetramers; dsDNA enters through RuvA and exits via RuvB. An RuvB hexamer assembles on each DNA strand where it exits the tetramer. Each RuvB hexamer is contacted by two RuvA subunits (via domain III) on 2 adjacent RuvB subunits; this complex drives branch migration. In the full resolvosome a probable DNA-RuvA(4)-RuvB(12)-RuvC(2) complex forms which resolves the HJ.

It localises to the cytoplasm. Its function is as follows. The RuvA-RuvB-RuvC complex processes Holliday junction (HJ) DNA during genetic recombination and DNA repair, while the RuvA-RuvB complex plays an important role in the rescue of blocked DNA replication forks via replication fork reversal (RFR). RuvA specifically binds to HJ cruciform DNA, conferring on it an open structure. The RuvB hexamer acts as an ATP-dependent pump, pulling dsDNA into and through the RuvAB complex. HJ branch migration allows RuvC to scan DNA until it finds its consensus sequence, where it cleaves and resolves the cruciform DNA. In Pseudomonas putida (strain ATCC 47054 / DSM 6125 / CFBP 8728 / NCIMB 11950 / KT2440), this protein is Holliday junction branch migration complex subunit RuvA.